We begin with the raw amino-acid sequence, 185 residues long: UPF0149 protein PFL_5969 (185 aa).

The protein belongs to the UPF0149 family.

In Pseudomonas fluorescens (strain ATCC BAA-477 / NRRL B-23932 / Pf-5), this protein is UPF0149 protein PFL_5969.